The sequence spans 86 residues: Small ribosomal subunit protein bS20 (86 aa).

The segment covering 1–27 (MANSKSAKKRATQAERRRQHNASRRSM) has biased composition (basic residues). The segment at 1 to 28 (MANSKSAKKRATQAERRRQHNASRRSMM) is disordered.

Belongs to the bacterial ribosomal protein bS20 family.

In terms of biological role, binds directly to 16S ribosomal RNA. This is Small ribosomal subunit protein bS20 from Aliivibrio fischeri (strain MJ11) (Vibrio fischeri).